The sequence spans 265 residues: RNA polymerase sigma factor SigI2 (265 aa).

Residues 71-84 (DEFSVGLAAFNEAI) carry the Polymerase core binding motif. The segment at residues 211 to 230 (KTELLKLLKINKKTIERNRT) is a DNA-binding region (H-T-H motif).

Belongs to the sigma-70 factor family. SigI subfamily. In terms of assembly, interacts with RsgI2.

The protein localises to the cytoplasm. Its activity is regulated as follows. Negatively regulated by the anti-sigma-I factor RsgI2. Binding of the polysaccharide substrate to RsgI2 may lead to the release and activation of SigI2. Its function is as follows. Sigma factors are initiation factors that promote the attachment of RNA polymerase to specific initiation sites and are then released. This sigma factor is involved in regulation of cellulosomal genes via an external polysaccharide-sensing mechanism. The sequence is that of RNA polymerase sigma factor SigI2 from Acetivibrio thermocellus (strain ATCC 27405 / DSM 1237 / JCM 9322 / NBRC 103400 / NCIMB 10682 / NRRL B-4536 / VPI 7372) (Clostridium thermocellum).